A 688-amino-acid chain; its full sequence is Phosphoinositide 3-phosphatase (688 aa).

Residues 155 to 637 enclose the Myotubularin phosphatase domain; the sequence is SWDIYDPIKE…KKVQWWWQLY (483 aa). C397 acts as the Phosphocysteine intermediate in catalysis. Residues 647–668 are compositionally biased toward basic and acidic residues; the sequence is ELRHKRDSVPISVDKKSKEHSN. Positions 647 to 672 are disordered; sequence ELRHKRDSVPISVDKKSKEHSNSDGG.

This sequence belongs to the protein-tyrosine phosphatase family. Non-receptor class myotubularin subfamily.

It is found in the cytoplasm. The catalysed reaction is a 1,2-diacyl-sn-glycero-3-phospho-(1D-myo-inositol-3-phosphate) + H2O = a 1,2-diacyl-sn-glycero-3-phospho-(1D-myo-inositol) + phosphate. Functionally, lipid phosphatase which dephosphorylates phosphatidylinositol 3-monophosphate (PI3P). Involved in the control of PI3P-dependent signaling and in the maintenance of endosomal system integrity. This chain is Phosphoinositide 3-phosphatase, found in Saccharomyces cerevisiae (strain ATCC 204508 / S288c) (Baker's yeast).